The following is a 173-amino-acid chain: Protein Rv3753c (173 aa).

The protein is Protein Rv3753c of Mycobacterium tuberculosis (strain ATCC 25618 / H37Rv).